Reading from the N-terminus, the 455-residue chain is MNIVILAAGMGKRMRSALPKVLHPLTGKPLLAHVIETARTMSPTRLVVVVGHGGDRVREMVGAPDIAFATQDKQLGTGHAVMQAVDQLDESVPTLVLYGDVPLTRAETLSALVGAAGNDHLGVLTVHLGDPTGYGRIVRDAAGRITRIVEQKDANETQLAIHEVNTGILVCPTAKLKSWLATLSNDNAQGEYYLTDVIERAASEGVPITSAHPLAEWETLGVNSKVQLAELERIHQRNLAQQLLEDGVTLIDPARIDVRGKLTCGRDVVIDVNCIFEGDVTLADGVRIGAHTVIRDAAIEAGAEILPFCHIERAKVGADSRIGPYARLRPGTELAEDVHIGNFVEVKNSQIAAHSKANHLAYVGDATVGSRVNIGAGTITCNYDGANKFRTVIEDDAFIGSDTQLVAPVRVGKGATLGAGTTLTKDAPEGKLTVSRARQVTIDSWQRPVKQKKEG.

The tract at residues 1 to 225 (MNIVILAAGM…EWETLGVNSK (225 aa)) is pyrophosphorylase. UDP-N-acetyl-alpha-D-glucosamine-binding positions include 6–9 (LAAG), K20, Q71, 76–77 (GT), 98–100 (YGD), G135, E150, N165, and N223. Residue D100 coordinates Mg(2+). Mg(2+) is bound at residue N223. The interval 226-246 (VQLAELERIHQRNLAQQLLED) is linker. An N-acetyltransferase region spans residues 247 to 455 (GVTLIDPARI…QRPVKQKKEG (209 aa)). Residues R329 and K347 each coordinate UDP-N-acetyl-alpha-D-glucosamine. Catalysis depends on H359, which acts as the Proton acceptor. UDP-N-acetyl-alpha-D-glucosamine contacts are provided by Y362 and N373. Acetyl-CoA contacts are provided by residues A376, 382–383 (NY), S401, A419, and R436.

This sequence in the N-terminal section; belongs to the N-acetylglucosamine-1-phosphate uridyltransferase family. The protein in the C-terminal section; belongs to the transferase hexapeptide repeat family. As to quaternary structure, homotrimer. It depends on Mg(2+) as a cofactor.

It localises to the cytoplasm. It carries out the reaction alpha-D-glucosamine 1-phosphate + acetyl-CoA = N-acetyl-alpha-D-glucosamine 1-phosphate + CoA + H(+). The catalysed reaction is N-acetyl-alpha-D-glucosamine 1-phosphate + UTP + H(+) = UDP-N-acetyl-alpha-D-glucosamine + diphosphate. The protein operates within nucleotide-sugar biosynthesis; UDP-N-acetyl-alpha-D-glucosamine biosynthesis; N-acetyl-alpha-D-glucosamine 1-phosphate from alpha-D-glucosamine 6-phosphate (route II): step 2/2. It participates in nucleotide-sugar biosynthesis; UDP-N-acetyl-alpha-D-glucosamine biosynthesis; UDP-N-acetyl-alpha-D-glucosamine from N-acetyl-alpha-D-glucosamine 1-phosphate: step 1/1. It functions in the pathway bacterial outer membrane biogenesis; LPS lipid A biosynthesis. In terms of biological role, catalyzes the last two sequential reactions in the de novo biosynthetic pathway for UDP-N-acetylglucosamine (UDP-GlcNAc). The C-terminal domain catalyzes the transfer of acetyl group from acetyl coenzyme A to glucosamine-1-phosphate (GlcN-1-P) to produce N-acetylglucosamine-1-phosphate (GlcNAc-1-P), which is converted into UDP-GlcNAc by the transfer of uridine 5-monophosphate (from uridine 5-triphosphate), a reaction catalyzed by the N-terminal domain. The protein is Bifunctional protein GlmU of Ralstonia pickettii (strain 12J).